The primary structure comprises 128 residues: Glycine cleavage system H protein (128 aa).

A Lipoyl-binding domain is found at 22–104 (TALVGVTDYA…YASGWLVKIK (83 aa)). At Lys-63 the chain carries N6-lipoyllysine.

Belongs to the GcvH family. In terms of assembly, the glycine cleavage system is composed of four proteins: P, T, L and H. Requires (R)-lipoate as cofactor.

Functionally, the glycine cleavage system catalyzes the degradation of glycine. The H protein shuttles the methylamine group of glycine from the P protein to the T protein. The chain is Glycine cleavage system H protein from Halothermothrix orenii (strain H 168 / OCM 544 / DSM 9562).